A 151-amino-acid chain; its full sequence is Large ribosomal subunit protein uL13 (151 aa).

It belongs to the universal ribosomal protein uL13 family. As to quaternary structure, part of the 50S ribosomal subunit.

This protein is one of the early assembly proteins of the 50S ribosomal subunit, although it is not seen to bind rRNA by itself. It is important during the early stages of 50S assembly. This is Large ribosomal subunit protein uL13 from Acaryochloris marina (strain MBIC 11017).